The chain runs to 666 residues: tRNA 5-methylaminomethyl-2-thiouridine biosynthesis bifunctional protein MnmC (666 aa).

The segment at 1–253 is tRNA (mnm(5)s(2)U34)-methyltransferase; sequence MSSPFAPIIT…KRHMLCAYYE (253 aa). Residues 283-666 form an FAD-dependent cmnm(5)s(2)U34 oxidoreductase region; it reads VGGGLAGCFI…FLRKKIIQGP (384 aa).

This sequence in the N-terminal section; belongs to the methyltransferase superfamily. tRNA (mnm(5)s(2)U34)-methyltransferase family. In the C-terminal section; belongs to the DAO family. Requires FAD as cofactor.

The protein localises to the cytoplasm. It carries out the reaction 5-aminomethyl-2-thiouridine(34) in tRNA + S-adenosyl-L-methionine = 5-methylaminomethyl-2-thiouridine(34) in tRNA + S-adenosyl-L-homocysteine + H(+). Functionally, catalyzes the last two steps in the biosynthesis of 5-methylaminomethyl-2-thiouridine (mnm(5)s(2)U) at the wobble position (U34) in tRNA. Catalyzes the FAD-dependent demodification of cmnm(5)s(2)U34 to nm(5)s(2)U34, followed by the transfer of a methyl group from S-adenosyl-L-methionine to nm(5)s(2)U34, to form mnm(5)s(2)U34. The chain is tRNA 5-methylaminomethyl-2-thiouridine biosynthesis bifunctional protein MnmC from Legionella pneumophila (strain Corby).